The following is a 63-amino-acid chain: Arabinogalactan protein 22 (63 aa).

The first 27 residues, 1-27, serve as a signal peptide directing secretion; sequence MASLKFPLEILAVFVIISVILLPIAQS. Residues P32, P34, and P36 each carry the 4-hydroxyproline modification. 3 O-linked (Ara...) hydroxyproline glycosylation sites follow: P32, P34, and P36. S38 carries the GPI-anchor amidated serine lipid modification. Residues 39–63 constitute a propeptide, removed in mature form; sequence DGTSIDQGIAYVLMMVALALTYFIH.

This sequence belongs to the AG-peptide AGP family. In terms of processing, contains 4-hydroxyproline; hydroxylated on Pro-32, Pro-34 and Pro-36. O-glycosylated on hydroxyprolines; noncontiguous hydroxylproline residues are glycosylated with arabinogalactan.

It is found in the cell membrane. Proteoglycan that seems to be implicated in diverse developmental roles such as differentiation, cell-cell recognition, embryogenesis and programmed cell death. The sequence is that of Arabinogalactan protein 22 from Arabidopsis thaliana (Mouse-ear cress).